The primary structure comprises 505 residues: MTTFTKLSEQETPSIAVHASRRISKINPNIYAGFTEHMGRCIYGGIYDPGNPLSDENGFRKDVLEALKELNIPVVRYPGGNFMATYHWIDGVGPKDQRPSRPELAWLGTETNQFGTDEFMKWCELLGTEPYFCLNFGTGTLDEALAWVEYCNGTRDTYYANLRRKNGREEPYNIKYWALGNEVWGPWQVAQTTKEEYAHKAYQWAKALKLLDPTLKLILCGQDGTASWDYYTLKHCILPVNSPLSTSAVPLIDMHSIHLYTSSSSHLPNVTAPLAAERAIEITSSLIDLAMIENGVPNTQLRPTICFDEWNVWDPIRAEGSKGAEESYTLSDALAVAVWLNVFVRKSKDVGMACIAQTVNVISPLMTTKDGIIKQTTWWPLYLFSKYMRGWTINTHVSCGTYEGETAPSWVRTVKDTPWLDVSATLGEDGYVNVAVVNISEDKDIESKFEGAAGEVAVFTVNGDSVSACNMNGKQEVGVTESTWDGKGAYAFPKHSLTLLRWKAE.

N152, N269, and N438 each carry an N-linked (GlcNAc...) asparagine glycan.

This sequence belongs to the glycosyl hydrolase 51 family.

The protein resides in the secreted. The catalysed reaction is Hydrolysis of terminal non-reducing alpha-L-arabinofuranoside residues in alpha-L-arabinosides.. The protein operates within glycan metabolism; L-arabinan degradation. Functionally, alpha-L-arabinofuranosidase involved in the degradation of arabinoxylan, a major component of plant hemicellulose. Acts only on small linear 1,5-alpha-linked L-arabinofuranosyl oligosaccharides. The sequence is that of Probable alpha-L-arabinofuranosidase C (abfC) from Aspergillus clavatus (strain ATCC 1007 / CBS 513.65 / DSM 816 / NCTC 3887 / NRRL 1 / QM 1276 / 107).